The sequence spans 701 residues: Elongation factor G (701 aa).

Residues 10-290 form the tr-type G domain; sequence AKVRNIGIMA…AVVDYLPSPL (281 aa). Residues 19–26, 83–87, and 137–140 contribute to the GTP site; these read AHIDAGKT, DTPGH, and NKMD.

The protein belongs to the TRAFAC class translation factor GTPase superfamily. Classic translation factor GTPase family. EF-G/EF-2 subfamily.

The protein resides in the cytoplasm. Its function is as follows. Catalyzes the GTP-dependent ribosomal translocation step during translation elongation. During this step, the ribosome changes from the pre-translocational (PRE) to the post-translocational (POST) state as the newly formed A-site-bound peptidyl-tRNA and P-site-bound deacylated tRNA move to the P and E sites, respectively. Catalyzes the coordinated movement of the two tRNA molecules, the mRNA and conformational changes in the ribosome. This chain is Elongation factor G, found in Tropheryma whipplei (strain TW08/27) (Whipple's bacillus).